A 225-amino-acid chain; its full sequence is NAD(P)H-quinone oxidoreductase subunit K, chloroplastic (225 aa).

[4Fe-4S] cluster is bound by residues Cys-43, Cys-44, Cys-108, and Cys-139.

The protein belongs to the complex I 20 kDa subunit family. As to quaternary structure, NDH is composed of at least 16 different subunits, 5 of which are encoded in the nucleus. The cofactor is [4Fe-4S] cluster.

Its subcellular location is the plastid. The protein localises to the chloroplast thylakoid membrane. The catalysed reaction is a plastoquinone + NADH + (n+1) H(+)(in) = a plastoquinol + NAD(+) + n H(+)(out). It carries out the reaction a plastoquinone + NADPH + (n+1) H(+)(in) = a plastoquinol + NADP(+) + n H(+)(out). Functionally, NDH shuttles electrons from NAD(P)H:plastoquinone, via FMN and iron-sulfur (Fe-S) centers, to quinones in the photosynthetic chain and possibly in a chloroplast respiratory chain. The immediate electron acceptor for the enzyme in this species is believed to be plastoquinone. Couples the redox reaction to proton translocation, and thus conserves the redox energy in a proton gradient. The protein is NAD(P)H-quinone oxidoreductase subunit K, chloroplastic of Atropa belladonna (Belladonna).